Reading from the N-terminus, the 79-residue chain is Small ribosomal subunit protein uS17 (79 aa).

This sequence belongs to the universal ribosomal protein uS17 family. Part of the 30S ribosomal subunit.

One of the primary rRNA binding proteins, it binds specifically to the 5'-end of 16S ribosomal RNA. This Orientia tsutsugamushi (strain Ikeda) (Rickettsia tsutsugamushi) protein is Small ribosomal subunit protein uS17.